Consider the following 236-residue polypeptide: Uridylate kinase (236 aa).

10-13 lines the ATP pocket; that stretch reads KLSG. Gly-52 serves as a coordination point for UMP. Residues Gly-53 and Arg-57 each contribute to the ATP site. UMP contacts are provided by residues Asp-72 and 133–140; that span reads TGNPFFTT. The ATP site is built by Thr-160, Tyr-166, and Asp-169.

It belongs to the UMP kinase family. In terms of assembly, homohexamer.

The protein localises to the cytoplasm. It carries out the reaction UMP + ATP = UDP + ADP. Its pathway is pyrimidine metabolism; CTP biosynthesis via de novo pathway; UDP from UMP (UMPK route): step 1/1. With respect to regulation, inhibited by UTP. In terms of biological role, catalyzes the reversible phosphorylation of UMP to UDP. The polypeptide is Uridylate kinase (Bacteroides thetaiotaomicron (strain ATCC 29148 / DSM 2079 / JCM 5827 / CCUG 10774 / NCTC 10582 / VPI-5482 / E50)).